A 301-amino-acid chain; its full sequence is Probable alpha-L-glutamate ligase (301 aa).

The 184-residue stretch at 104–287 (TQLLARKGIG…IAGTIYAFLE (184 aa)) folds into the ATP-grasp domain. Residues Lys141, 178–179 (EY), Asp187, and 211–213 (RSN) contribute to the ATP site. The Mg(2+) site is built by Asp248, Glu260, and Asn262. Mn(2+) is bound by residues Asp248, Glu260, and Asn262.

The protein belongs to the RimK family. Mg(2+) is required as a cofactor. Requires Mn(2+) as cofactor.

This chain is Probable alpha-L-glutamate ligase, found in Alkalilimnicola ehrlichii (strain ATCC BAA-1101 / DSM 17681 / MLHE-1).